Reading from the N-terminus, the 622-residue chain is Mitochondrial distribution and morphology protein 34 (622 aa).

The SMP-LTD domain maps to 1–204 (MSFKVNWNSL…LPTLIHQLSL (204 aa)). Disordered regions lie at residues 362–399 (YSNKDAPTKPKRRRIKVHKKNKSKHDETTTTTSKPSEL) and 568–592 (FDGGKNNNTNDNNSKNFRPGFTRNE). Positions 370–384 (KPKRRRIKVHKKNKS) are enriched in basic residues. Residues 390 to 399 (TTTTSKPSEL) show a composition bias toward polar residues. A compositionally biased stretch (low complexity) spans 571–583 (GKNNNTNDNNSKN).

It belongs to the MDM34 family. As to quaternary structure, component of the ER-mitochondria encounter structure (ERMES) or MDM complex, composed of MMM1, MDM10, MDM12 and MDM34.

The protein localises to the mitochondrion outer membrane. Component of the ERMES/MDM complex, which serves as a molecular tether to connect the endoplasmic reticulum (ER) and mitochondria. Components of this complex are involved in the control of mitochondrial shape and protein biogenesis, and function in nonvesicular lipid trafficking between the ER and mitochondria. MDM34 is required for the interaction of the ER-resident membrane protein MMM1 and the outer mitochondrial membrane-resident beta-barrel protein MDM10. This Candida dubliniensis (strain CD36 / ATCC MYA-646 / CBS 7987 / NCPF 3949 / NRRL Y-17841) (Yeast) protein is Mitochondrial distribution and morphology protein 34.